We begin with the raw amino-acid sequence, 452 residues long: Cytoplasmic tRNA 2-thiolation protein 2 (452 aa).

The protein belongs to the CTU2/NCS2 family.

It localises to the cytoplasm. Its pathway is tRNA modification; 5-methoxycarbonylmethyl-2-thiouridine-tRNA biosynthesis. Plays a central role in 2-thiolation of mcm(5)S(2)U at tRNA wobble positions of tRNA(Lys), tRNA(Glu) and tRNA(Gln). May act by forming a heterodimer with NCS6 that ligates sulfur from thiocarboxylated URM1 onto the uridine of tRNAs at wobble position. Prior mcm(5) tRNA modification by the elongator complex is required for 2-thiolation. May also be involved in protein urmylation. This is Cytoplasmic tRNA 2-thiolation protein 2 from Candida albicans (strain SC5314 / ATCC MYA-2876) (Yeast).